The following is a 118-amino-acid chain: Beta-2-microglobulin (118 aa).

An N-terminal signal peptide occupies residues 1 to 20; that stretch reads MARVVALVLLGLLSLTGLEA. Positions 22–115 constitute an Ig-like C1-type domain; the sequence is PRVPKVQVYS…LKDPLIVKWD (94 aa). Cys45 and Cys99 are disulfide-bonded.

Belongs to the beta-2-microglobulin family. In terms of assembly, heterodimer of an alpha chain and a beta chain. Beta-2-microglobulin is the beta-chain of major histocompatibility complex class I molecules.

Its subcellular location is the secreted. In terms of biological role, component of the class I major histocompatibility complex (MHC). Involved in the presentation of peptide antigens to the immune system. This Equus caballus (Horse) protein is Beta-2-microglobulin (B2M).